The primary structure comprises 202 residues: Guanylate kinase (202 aa).

Positions 3 to 181 (GNLFVVAAPS…ALDDLRAVVR (179 aa)) constitute a Guanylate kinase-like domain. 10–17 (APSGAGKT) contacts ATP.

The protein belongs to the guanylate kinase family.

Its subcellular location is the cytoplasm. The enzyme catalyses GMP + ATP = GDP + ADP. In terms of biological role, essential for recycling GMP and indirectly, cGMP. In Dechloromonas aromatica (strain RCB), this protein is Guanylate kinase.